We begin with the raw amino-acid sequence, 308 residues long: Ribosomal RNA large subunit methyltransferase F (308 aa).

Belongs to the methyltransferase superfamily. METTL16/RlmF family.

The protein localises to the cytoplasm. The catalysed reaction is adenosine(1618) in 23S rRNA + S-adenosyl-L-methionine = N(6)-methyladenosine(1618) in 23S rRNA + S-adenosyl-L-homocysteine + H(+). Functionally, specifically methylates the adenine in position 1618 of 23S rRNA. The protein is Ribosomal RNA large subunit methyltransferase F of Escherichia coli O127:H6 (strain E2348/69 / EPEC).